The sequence spans 316 residues: tRNA dimethylallyltransferase (316 aa).

27–34 lines the ATP pocket; sequence GATATGKT. 29–34 serves as a coordination point for substrate; the sequence is TATGKT. The segment at 52-55 is interaction with substrate tRNA; the sequence is DSRQ.

Belongs to the IPP transferase family. As to quaternary structure, monomer. Mg(2+) is required as a cofactor.

It carries out the reaction adenosine(37) in tRNA + dimethylallyl diphosphate = N(6)-dimethylallyladenosine(37) in tRNA + diphosphate. Its function is as follows. Catalyzes the transfer of a dimethylallyl group onto the adenine at position 37 in tRNAs that read codons beginning with uridine, leading to the formation of N6-(dimethylallyl)adenosine (i(6)A). This chain is tRNA dimethylallyltransferase, found in Treponema pallidum (strain Nichols).